Consider the following 1556-residue polypeptide: Ras guanine nucleotide exchange factor G (1556 aa).

Disordered regions lie at residues 19–63, 93–141, 163–239, and 254–296; these read IGNI…KNRG, LQLN…SSTT, SHVT…LSPS, and ATDS…NNNS. Low complexity-rich tracts occupy residues 25–54 and 96–141; these read NNNN…SGSN and NDTD…SSTT. A compositionally biased stretch (acidic residues) spans 170 to 186; sequence DDDDDDESSSSEEDFDS. Low complexity predominate over residues 196 to 216; the sequence is TSSTTATTTTTTTSVSPLTSS. Residues 256–271 show a composition bias toward polar residues; it reads DSDNQSLEPCNNKTIV. A compositionally biased stretch (low complexity) spans 279–295; that stretch reads DNNNNHNNNNNNNNNNN. Residues 307–353 enclose the F-box 1 domain; the sequence is NKTFLDLDEKIYLKIFGYLFAEDLCSINRVSKHLCNIINNQQLWKDL. The disordered stretch occupies residues 385–416; that stretch reads NNNNNNNNNNNNNNNNSNISNNNNNINNSNGN. The F-box 2 domain occupies 679-726; sequence VFDISRVSDILLIKIFRNLDSIKDLSVCQRVSKRWNKAIAISSLWEQL. 2 disordered regions span residues 762 to 815 and 827 to 1101; these read QPSP…NGLN and GSNL…ITNN. Positions 827-848 are enriched in low complexity; it reads GSNLSNGGNSGSSFSPFNPLSG. Residues 849–866 show a composition bias toward gly residues; that stretch reads SNGGSSFGPFGSGGGGGS. Composition is skewed to low complexity over residues 867 to 880 and 888 to 910; these read NSNI…LNSS and FLAM…TIST. Residues 911 to 935 are compositionally biased toward polar residues; that stretch reads NCTPTGGSTTNSPNFQSPMVSSSTV. 2 stretches are compositionally biased toward low complexity: residues 943 to 957 and 972 to 1053; these read SPNL…ISLS and PDSS…IQPI. The span at 1059 to 1076 shows a compositional bias: polar residues; it reads VNNNGSQSDLSKISDLNA. Over residues 1077-1101 the composition is skewed to low complexity; the sequence is NPNTTTTTTTNTIESSSSSSSITNN. The 129-residue stretch at 1116-1244 folds into the N-terminal Ras-GEF domain; it reads MINVQKLMNL…LIRSFSRKLS (129 aa). The segment at 1254–1279 is disordered; that stretch reads IGITGGKSSRKGGGSGSGSGSGGGSG. Residues 1264-1279 are compositionally biased toward gly residues; the sequence is KGGGSGSGSGSGGGSG. The 232-residue stretch at 1317–1548 folds into the Ras-GEF domain; it reads PAEEIAKQLT…YRVSMQREPR (232 aa).

Promotes the exchange of Ras-bound GDP by GTP. In Dictyostelium discoideum (Social amoeba), this protein is Ras guanine nucleotide exchange factor G (gefG).